The primary structure comprises 137 residues: Protein PsiE homolog (137 aa).

Transmembrane regions (helical) follow at residues 13–35, 55–77, 84–103, and 107–129; these read ILLR…AFLI, YYMT…IVKY, FPLR…FIIV, and SATS…FLAN.

This sequence belongs to the PsiE family.

Its subcellular location is the cell membrane. The polypeptide is Protein PsiE homolog (Listeria monocytogenes serotype 4b (strain F2365)).